The primary structure comprises 446 residues: tRNA-2-methylthio-N(6)-dimethylallyladenosine synthase (446 aa).

In terms of domain architecture, MTTase N-terminal spans 3–124 (KKLYIKTYGC…LPELISKVVR (122 aa)). [4Fe-4S] cluster-binding residues include Cys12, Cys48, Cys87, Cys162, Cys166, and Cys169. Residues 148–380 (YPQGASSFIS…QKELAAQQLA (233 aa)) form the Radical SAM core domain. The TRAM domain maps to 383 to 446 (ESCIGSTMKV…LNSLSGEIYR (64 aa)).

The protein belongs to the methylthiotransferase family. MiaB subfamily. In terms of assembly, monomer. [4Fe-4S] cluster is required as a cofactor.

The protein resides in the cytoplasm. The enzyme catalyses N(6)-dimethylallyladenosine(37) in tRNA + (sulfur carrier)-SH + AH2 + 2 S-adenosyl-L-methionine = 2-methylsulfanyl-N(6)-dimethylallyladenosine(37) in tRNA + (sulfur carrier)-H + 5'-deoxyadenosine + L-methionine + A + S-adenosyl-L-homocysteine + 2 H(+). In terms of biological role, catalyzes the methylthiolation of N6-(dimethylallyl)adenosine (i(6)A), leading to the formation of 2-methylthio-N6-(dimethylallyl)adenosine (ms(2)i(6)A) at position 37 in tRNAs that read codons beginning with uridine. The chain is tRNA-2-methylthio-N(6)-dimethylallyladenosine synthase from Rickettsia bellii (strain OSU 85-389).